Here is a 219-residue protein sequence, read N- to C-terminus: Large ribosomal subunit protein bL25 (219 aa).

The tract at residues 195-219 is disordered; the sequence is EETTTTETSNEPEVIKKGKKEEEEK. Low complexity predominate over residues 197–206; it reads TTTTETSNEP. A compositionally biased stretch (basic and acidic residues) spans 207-219; sequence EVIKKGKKEEEEK.

The protein belongs to the bacterial ribosomal protein bL25 family. CTC subfamily. Part of the 50S ribosomal subunit; part of the 5S rRNA/L5/L18/L25 subcomplex. Contacts the 5S rRNA. Binds to the 5S rRNA independently of L5 and L18.

This is one of the proteins that binds to the 5S RNA in the ribosome where it forms part of the central protuberance. The protein is Large ribosomal subunit protein bL25 of Fervidobacterium nodosum (strain ATCC 35602 / DSM 5306 / Rt17-B1).